The chain runs to 227 residues: Cytidylate kinase (227 aa).

Position 10 to 18 (10 to 18 (GPSGSGKGT)) interacts with ATP.

The protein belongs to the cytidylate kinase family. Type 1 subfamily.

Its subcellular location is the cytoplasm. The catalysed reaction is CMP + ATP = CDP + ADP. The enzyme catalyses dCMP + ATP = dCDP + ADP. This is Cytidylate kinase from Acinetobacter baylyi (strain ATCC 33305 / BD413 / ADP1).